The primary structure comprises 321 residues: Fructose-1,6-bisphosphatase 2 class 2 (321 aa).

Aspartate 32, glutamate 56, aspartate 84, and glutamate 87 together coordinate Mn(2+). Substrate is bound by residues 87 to 89, tyrosine 118, 163 to 165, 185 to 187, and glycine 209; these read EGT, KPR, and DGD. Residue glutamate 212 participates in Mn(2+) binding.

This sequence belongs to the FBPase class 2 family. Homodimer. It depends on Mn(2+) as a cofactor.

The enzyme catalyses beta-D-fructose 1,6-bisphosphate + H2O = beta-D-fructose 6-phosphate + phosphate. Competitively inhibited by low concentrations of phosphate (IC50 of 1.2 mM) and is also sensitive to Li(+) (IC50 of 15.8 mM). Also inhibited by 1 mM ATP or 50 mM KCl (60% and 20% residual activity, respectively). Slightly activated (40-50%) by the addition of 1 mM dithiothreitol in vitro. Its function is as follows. Catalyzes the hydrolysis of fructose 1,6-bisphosphate to fructose 6-phosphate. Also displays a low activity toward glucose 1,6-bisphosphate, and no activity against ribulose 1,5-bisphosphate, fructose 2,6-bisphosphate, or fructose 1-phosphate. This is Fructose-1,6-bisphosphatase 2 class 2 (yggF) from Escherichia coli (strain K12).